A 932-amino-acid chain; its full sequence is Protocadherin gamma-A2 (932 aa).

Positions 1–28 are cleaved as a signal peptide; the sequence is MAALQKLPHCRKLFLLCFLLATLWEARA. Cadherin domains follow at residues 29-133, 134-242, 243-347, 348-452, 453-562, and 570-682; these read GQIR…APRF, GVEE…APVF, TQPE…APEF, YMTS…APAF, SRTS…PPEI, and DGST…EPSA. Over 29 to 692 the chain is Extracellular; sequence GQIRYSVREE…KPNDSDLTLY (664 aa). N-linked (GlcNAc...) asparagine glycosylation is found at Asn-419 and Asn-545. An N-linked (GlcNAc...) asparagine glycan is attached at Asn-685. The helical transmembrane segment at 693-713 threads the bilayer; that stretch reads LVVAVAAVSCVFLAFVIVLLA. Over 714-932 the chain is Cytoplasmic; it reads HRLRRWHKSR…KKKSGKKEKK (219 aa). Disordered regions lie at residues 798-841 and 902-932; these read LEEE…WPNN and ATLT…KEKK. Residues 806–841 are compositionally biased toward polar residues; that stretch reads FSQQAPPNTDWRFSQAQRPGTSGSQNGDDTGTWPNN. Residues 922 to 932 are compositionally biased toward basic residues; the sequence is NKKKSGKKEKK.

It localises to the cell membrane. Its function is as follows. Potential calcium-dependent cell-adhesion protein. May be involved in the establishment and maintenance of specific neuronal connections in the brain. The chain is Protocadherin gamma-A2 (PCDHGA2) from Pan troglodytes (Chimpanzee).